The following is a 516-amino-acid chain: Bifunctional purine biosynthesis protein PurH (516 aa).

An MGS-like domain is found at 1 to 146; it reads MTRLALLSVS…KNYAHVTVLS (146 aa).

This sequence belongs to the PurH family.

The catalysed reaction is (6R)-10-formyltetrahydrofolate + 5-amino-1-(5-phospho-beta-D-ribosyl)imidazole-4-carboxamide = 5-formamido-1-(5-phospho-D-ribosyl)imidazole-4-carboxamide + (6S)-5,6,7,8-tetrahydrofolate. It catalyses the reaction IMP + H2O = 5-formamido-1-(5-phospho-D-ribosyl)imidazole-4-carboxamide. Its pathway is purine metabolism; IMP biosynthesis via de novo pathway; 5-formamido-1-(5-phospho-D-ribosyl)imidazole-4-carboxamide from 5-amino-1-(5-phospho-D-ribosyl)imidazole-4-carboxamide (10-formyl THF route): step 1/1. It functions in the pathway purine metabolism; IMP biosynthesis via de novo pathway; IMP from 5-formamido-1-(5-phospho-D-ribosyl)imidazole-4-carboxamide: step 1/1. This chain is Bifunctional purine biosynthesis protein PurH, found in Rippkaea orientalis (strain PCC 8801 / RF-1) (Cyanothece sp. (strain PCC 8801)).